Here is a 119-residue protein sequence, read N- to C-terminus: Ribonuclease P protein component (119 aa).

This sequence belongs to the RnpA family. Consists of a catalytic RNA component (M1 or rnpB) and a protein subunit.

It carries out the reaction Endonucleolytic cleavage of RNA, removing 5'-extranucleotides from tRNA precursor.. Functionally, RNaseP catalyzes the removal of the 5'-leader sequence from pre-tRNA to produce the mature 5'-terminus. It can also cleave other RNA substrates such as 4.5S RNA. The protein component plays an auxiliary but essential role in vivo by binding to the 5'-leader sequence and broadening the substrate specificity of the ribozyme. This is Ribonuclease P protein component from Clostridium acetobutylicum (strain ATCC 824 / DSM 792 / JCM 1419 / IAM 19013 / LMG 5710 / NBRC 13948 / NRRL B-527 / VKM B-1787 / 2291 / W).